The sequence spans 528 residues: Probable feruloyl esterase B-1 (528 aa).

A signal peptide spans 1–19 (MMWWFLLIGLASAAATASS). 6 disulfides stabilise this stretch: Cys-29–Cys-78, Cys-64–Cys-117, Cys-190–Cys-445, Cys-259–Cys-276, Cys-285–Cys-295, and Cys-505–Cys-527. N-linked (GlcNAc...) asparagine glycans are attached at residues Asn-83 and Asn-101. Ser-191 serves as the catalytic Acyl-ester intermediate. Ca(2+) contacts are provided by Asp-260, Asp-263, Ala-265, Asp-267, and Ile-269. N-linked (GlcNAc...) asparagine glycosylation is found at Asn-286, Asn-354, and Asn-385. Catalysis depends on charge relay system residues Asp-404 and His-444.

Belongs to the tannase family.

Its subcellular location is the secreted. It catalyses the reaction feruloyl-polysaccharide + H2O = ferulate + polysaccharide.. Its function is as follows. Involved in degradation of plant cell walls. Hydrolyzes the feruloyl-arabinose ester bond in arabinoxylans as well as the feruloyl-galactose and feruloyl-arabinose ester bonds in pectin. The chain is Probable feruloyl esterase B-1 (faeB-1) from Aspergillus fumigatus (strain CBS 144.89 / FGSC A1163 / CEA10) (Neosartorya fumigata).